The chain runs to 103 residues: ATP synthase subunit c (103 aa).

Helical transmembrane passes span 3–23 (FLAL…VSGL), 30–50 (SIAG…IGMG), and 74–94 (MFIA…LALI).

The protein belongs to the ATPase C chain family. As to quaternary structure, F-type ATPases have 2 components, F(1) - the catalytic core - and F(0) - the membrane proton channel. F(1) has five subunits: alpha(3), beta(3), gamma(1), delta(1), epsilon(1). F(0) has three main subunits: a(1), b(2) and c(10-14). The alpha and beta chains form an alternating ring which encloses part of the gamma chain. F(1) is attached to F(0) by a central stalk formed by the gamma and epsilon chains, while a peripheral stalk is formed by the delta and b chains.

The protein localises to the cell inner membrane. Functionally, f(1)F(0) ATP synthase produces ATP from ADP in the presence of a proton or sodium gradient. F-type ATPases consist of two structural domains, F(1) containing the extramembraneous catalytic core and F(0) containing the membrane proton channel, linked together by a central stalk and a peripheral stalk. During catalysis, ATP synthesis in the catalytic domain of F(1) is coupled via a rotary mechanism of the central stalk subunits to proton translocation. In terms of biological role, key component of the F(0) channel; it plays a direct role in translocation across the membrane. A homomeric c-ring of between 10-14 subunits forms the central stalk rotor element with the F(1) delta and epsilon subunits. The polypeptide is ATP synthase subunit c (Helicobacter hepaticus (strain ATCC 51449 / 3B1)).